A 118-amino-acid polypeptide reads, in one-letter code: Large ribosomal subunit protein bL20 (118 aa).

Belongs to the bacterial ribosomal protein bL20 family.

Its function is as follows. Binds directly to 23S ribosomal RNA and is necessary for the in vitro assembly process of the 50S ribosomal subunit. It is not involved in the protein synthesizing functions of that subunit. This is Large ribosomal subunit protein bL20 from Edwardsiella ictaluri (strain 93-146).